Reading from the N-terminus, the 211-residue chain is Thymidylate kinase (211 aa).

11–18 (GPDGAGKT) serves as a coordination point for ATP.

It belongs to the thymidylate kinase family.

It carries out the reaction dTMP + ATP = dTDP + ADP. Functionally, phosphorylation of dTMP to form dTDP in both de novo and salvage pathways of dTTP synthesis. The polypeptide is Thymidylate kinase (Streptococcus equi subsp. zooepidemicus (strain H70)).